A 273-amino-acid chain; its full sequence is Formamidopyrimidine-DNA glycosylase (273 aa).

Proline 2 functions as the Schiff-base intermediate with DNA in the catalytic mechanism. The active-site Proton donor is glutamate 3. The active-site Proton donor; for beta-elimination activity is the lysine 58. DNA is bound by residues histidine 91, arginine 109, and arginine 154. The FPG-type zinc-finger motif lies at 239–273 (FCYARTGEPCRICKTPIRQIVQGQRSTFYCPNCQK). Arginine 263 serves as the catalytic Proton donor; for delta-elimination activity.

The protein belongs to the FPG family. In terms of assembly, monomer. The cofactor is Zn(2+).

It carries out the reaction Hydrolysis of DNA containing ring-opened 7-methylguanine residues, releasing 2,6-diamino-4-hydroxy-5-(N-methyl)formamidopyrimidine.. The enzyme catalyses 2'-deoxyribonucleotide-(2'-deoxyribose 5'-phosphate)-2'-deoxyribonucleotide-DNA = a 3'-end 2'-deoxyribonucleotide-(2,3-dehydro-2,3-deoxyribose 5'-phosphate)-DNA + a 5'-end 5'-phospho-2'-deoxyribonucleoside-DNA + H(+). Functionally, involved in base excision repair of DNA damaged by oxidation or by mutagenic agents. Acts as a DNA glycosylase that recognizes and removes damaged bases. Has a preference for oxidized purines, such as 7,8-dihydro-8-oxoguanine (8-oxoG). Has AP (apurinic/apyrimidinic) lyase activity and introduces nicks in the DNA strand. Cleaves the DNA backbone by beta-delta elimination to generate a single-strand break at the site of the removed base with both 3'- and 5'-phosphates. This is Formamidopyrimidine-DNA glycosylase from Janthinobacterium sp. (strain Marseille) (Minibacterium massiliensis).